The chain runs to 162 residues: Ribosome maturation factor RimP (162 aa).

This sequence belongs to the RimP family.

The protein resides in the cytoplasm. Functionally, required for maturation of 30S ribosomal subunits. The protein is Ribosome maturation factor RimP of Streptococcus gordonii (strain Challis / ATCC 35105 / BCRC 15272 / CH1 / DL1 / V288).